An 82-amino-acid chain; its full sequence is ATP synthase subunit c (82 aa).

2 helical membrane-spanning segments follow: residues 5–25 (MSLV…FGAI) and 55–75 (FLII…VIAF).

This sequence belongs to the ATPase C chain family. In terms of assembly, F-type ATPases have 2 components, F(1) - the catalytic core - and F(0) - the membrane proton channel. F(1) has five subunits: alpha(3), beta(3), gamma(1), delta(1), epsilon(1). F(0) has three main subunits: a(1), b(2) and c(10-14). The alpha and beta chains form an alternating ring which encloses part of the gamma chain. F(1) is attached to F(0) by a central stalk formed by the gamma and epsilon chains, while a peripheral stalk is formed by the delta and b chains.

The protein localises to the cell membrane. F(1)F(0) ATP synthase produces ATP from ADP in the presence of a proton or sodium gradient. F-type ATPases consist of two structural domains, F(1) containing the extramembraneous catalytic core and F(0) containing the membrane proton channel, linked together by a central stalk and a peripheral stalk. During catalysis, ATP synthesis in the catalytic domain of F(1) is coupled via a rotary mechanism of the central stalk subunits to proton translocation. Its function is as follows. Key component of the F(0) channel; it plays a direct role in translocation across the membrane. A homomeric c-ring of between 10-14 subunits forms the central stalk rotor element with the F(1) delta and epsilon subunits. This Carboxydothermus hydrogenoformans (strain ATCC BAA-161 / DSM 6008 / Z-2901) protein is ATP synthase subunit c.